The chain runs to 121 residues: Protein TusC (121 aa).

The protein belongs to the DsrF/TusC family. As to quaternary structure, heterohexamer, formed by a dimer of trimers. The hexameric TusBCD complex contains 2 copies each of TusB, TusC and TusD. The TusBCD complex interacts with TusE.

It localises to the cytoplasm. Part of a sulfur-relay system required for 2-thiolation of 5-methylaminomethyl-2-thiouridine (mnm(5)s(2)U) at tRNA wobble positions. This is Protein TusC from Yersinia pestis bv. Antiqua (strain Antiqua).